The chain runs to 451 residues: ADP-specific phosphofructokinase (451 aa).

The 450-residue stretch at 1 to 450 (MSVPQDVSIF…FITYVNYLKR (450 aa)) folds into the ADPK domain. Positions 261, 291, and 434 each coordinate Mg(2+). Catalysis depends on D434, which acts as the Proton acceptor.

The protein belongs to the carbohydrate kinase PfkC family. Mg(2+) serves as cofactor.

It is found in the cytoplasm. It carries out the reaction beta-D-fructose 6-phosphate + ADP = beta-D-fructose 1,6-bisphosphate + AMP + H(+). It functions in the pathway carbohydrate degradation; glycolysis. In terms of biological role, catalyzes the phosphorylation of fructose 6-phosphate to fructose 1,6-bisphosphate using ADP as the phosphate donor. The polypeptide is ADP-specific phosphofructokinase (Pyrococcus abyssi (strain GE5 / Orsay)).